We begin with the raw amino-acid sequence, 605 residues long: DNA primase (605 aa).

A CHC2-type zinc finger spans residues 38–62 (CPFHDEKTPSFTVSEDKQICHCFGC). The Toprim domain occupies 260–341 (DEIVLLEGFM…NVFVIQLPSG (82 aa)). 3 residues coordinate Mg(2+): E266, D310, and D312.

This sequence belongs to the DnaG primase family. Monomer. Interacts with DnaB. It depends on Zn(2+) as a cofactor. Mg(2+) serves as cofactor.

It catalyses the reaction ssDNA + n NTP = ssDNA/pppN(pN)n-1 hybrid + (n-1) diphosphate.. RNA polymerase that catalyzes the synthesis of short RNA molecules used as primers for DNA polymerase during DNA replication. The sequence is that of DNA primase from Staphylococcus aureus (strain MW2).